A 326-amino-acid polypeptide reads, in one-letter code: Interleukin-1-binding protein (326 aa).

The signal sequence occupies residues 1–18 (MSILPVIFLSIFFYSSFV). Ig-like domains lie at 24-115 (PECI…LNLT), 122-212 (SNID…RIVK), and 221-322 (PSTM…KTVT). Cys48 and Cys99 are joined by a disulfide. 3 N-linked (GlcNAc...) asparagine; by host glycosylation sites follow: Asn80, Asn103, and Asn113. Cys143 and Cys194 are oxidised to a cystine. N-linked (GlcNAc...) asparagine; by host glycosylation is found at Asn206 and Asn237. The cysteines at positions 242 and 309 are disulfide-linked.

This sequence belongs to the interleukin-1 receptor family. As to quaternary structure, interacts with mouse Il1b.

Its subcellular location is the secreted. In terms of biological role, may reduce the host inflammatory response by interacting with inteleukin-1 beta (Il1b) and thus decreasing the association between IL1B and its cellular receptor. In Vaccinia virus (strain Ankara) (VACV), this protein is Interleukin-1-binding protein (OPG201).